Reading from the N-terminus, the 420-residue chain is Histidine--tRNA ligase (420 aa).

The protein belongs to the class-II aminoacyl-tRNA synthetase family. As to quaternary structure, homodimer.

The protein resides in the cytoplasm. It carries out the reaction tRNA(His) + L-histidine + ATP = L-histidyl-tRNA(His) + AMP + diphosphate + H(+). This is Histidine--tRNA ligase from Thermotoga sp. (strain RQ2).